The following is a 255-amino-acid chain: Undecaprenyl-diphosphatase (255 aa).

A run of 6 helical transmembrane segments spans residues 1–21 (MDII…FLPI), 75–95 (IIIS…IVYQ), 96–116 (LFTV…FLIV), 174–194 (TEFS…FDIV), 203–223 (GDIS…LITI), and 234–254 (NFVP…MFFV).

It belongs to the UppP family.

The protein localises to the cell membrane. It catalyses the reaction di-trans,octa-cis-undecaprenyl diphosphate + H2O = di-trans,octa-cis-undecaprenyl phosphate + phosphate + H(+). In terms of biological role, catalyzes the dephosphorylation of undecaprenyl diphosphate (UPP). The protein is Undecaprenyl-diphosphatase of Methanococcus aeolicus (strain ATCC BAA-1280 / DSM 17508 / OCM 812 / Nankai-3).